A 214-amino-acid chain; its full sequence is Putative ankyrin repeat protein RF_1081 (214 aa).

A compositionally biased stretch (polar residues) spans M1 to L14. Residues M1 to T32 are disordered. An ANK repeat occupies N67–D135.

This Rickettsia felis (strain ATCC VR-1525 / URRWXCal2) (Rickettsia azadi) protein is Putative ankyrin repeat protein RF_1081.